We begin with the raw amino-acid sequence, 250 residues long: Triosephosphate isomerase (250 aa).

Substrate is bound at residue 9 to 11; that stretch reads NWK. Residue histidine 95 is the Electrophile of the active site. The active-site Proton acceptor is glutamate 167. Residues glycine 173, serine 213, and 234–235 each bind substrate; that span reads GG.

This sequence belongs to the triosephosphate isomerase family. As to quaternary structure, homodimer.

The protein resides in the cytoplasm. The catalysed reaction is D-glyceraldehyde 3-phosphate = dihydroxyacetone phosphate. It functions in the pathway carbohydrate biosynthesis; gluconeogenesis. The protein operates within carbohydrate degradation; glycolysis; D-glyceraldehyde 3-phosphate from glycerone phosphate: step 1/1. Its function is as follows. Involved in the gluconeogenesis. Catalyzes stereospecifically the conversion of dihydroxyacetone phosphate (DHAP) to D-glyceraldehyde-3-phosphate (G3P). The sequence is that of Triosephosphate isomerase from Exiguobacterium sibiricum (strain DSM 17290 / CCUG 55495 / CIP 109462 / JCM 13490 / 255-15).